Consider the following 645-residue polypeptide: Phosphomethylpyrimidine synthase (645 aa).

Substrate-binding positions include asparagine 235, methionine 264, tyrosine 293, histidine 329, 349-351 (SRG), 390-393 (DGLR), and glutamate 429. Histidine 433 serves as a coordination point for Zn(2+). Substrate is bound at residue tyrosine 456. Histidine 497 contacts Zn(2+). [4Fe-4S] cluster-binding residues include cysteine 577, cysteine 580, and cysteine 585.

It belongs to the ThiC family. As to quaternary structure, homodimer. It depends on [4Fe-4S] cluster as a cofactor.

The enzyme catalyses 5-amino-1-(5-phospho-beta-D-ribosyl)imidazole + S-adenosyl-L-methionine = 4-amino-2-methyl-5-(phosphooxymethyl)pyrimidine + CO + 5'-deoxyadenosine + formate + L-methionine + 3 H(+). Its pathway is cofactor biosynthesis; thiamine diphosphate biosynthesis. Functionally, catalyzes the synthesis of the hydroxymethylpyrimidine phosphate (HMP-P) moiety of thiamine from aminoimidazole ribotide (AIR) in a radical S-adenosyl-L-methionine (SAM)-dependent reaction. This chain is Phosphomethylpyrimidine synthase, found in Vibrio cholerae serotype O1 (strain ATCC 39541 / Classical Ogawa 395 / O395).